The primary structure comprises 148 residues: Large ribosomal subunit protein bL9 (148 aa).

It belongs to the bacterial ribosomal protein bL9 family.

In terms of biological role, binds to the 23S rRNA. This is Large ribosomal subunit protein bL9 from Pseudomonas putida (strain GB-1).